Here is a 230-residue protein sequence, read N- to C-terminus: Protein FAM3A (230 aa).

Residues 1-33 (MRLAGPLRIVALVVSVGLTWIVVSILLGGPGSG) form the signal peptide. 2 disulfide bridges follow: Cys-59/Cys-87 and Cys-65/Cys-222. A GG-type lectin domain is found at 68–226 (EHLAFRVVSG…LEMEGCIPRR (159 aa)).

The protein belongs to the FAM3 family.

Its subcellular location is the secreted. In Pongo abelii (Sumatran orangutan), this protein is Protein FAM3A (FAM3A).